The primary structure comprises 389 residues: Leucine aminopeptidase 1 (389 aa).

A signal peptide spans 1–18; it reads MKSAALLLPLYTAAFAAA. The propeptide occupies 19 to 89; that stretch reads AFHHEHAQAV…TLNHRINAES (71 aa). N99, N146, and N156 each carry an N-linked (GlcNAc...) asparagine glycan. 4 residues coordinate Zn(2+): H188, D207, E246, and D273. A disulfide bond links C322 and C326. H355 provides a ligand contact to Zn(2+).

The protein belongs to the peptidase M28 family. M28E subfamily. In terms of assembly, monomer. Zn(2+) serves as cofactor.

It is found in the secreted. Its function is as follows. Extracellular aminopeptidase that allows assimilation of proteinaceous substrates. The protein is Leucine aminopeptidase 1 (lap1) of Pyrenophora tritici-repentis (strain Pt-1C-BFP) (Wheat tan spot fungus).